We begin with the raw amino-acid sequence, 351 residues long: DNA polymerase IV (351 aa).

The region spanning 4–185 (IIHVDMDCFF…LPLEKIPGVG (182 aa)) is the UmuC domain. Mg(2+) is bound by residues aspartate 8 and aspartate 103. Glutamate 104 is a catalytic residue.

The protein belongs to the DNA polymerase type-Y family. Monomer. Mg(2+) is required as a cofactor.

Its subcellular location is the cytoplasm. It catalyses the reaction DNA(n) + a 2'-deoxyribonucleoside 5'-triphosphate = DNA(n+1) + diphosphate. Poorly processive, error-prone DNA polymerase involved in untargeted mutagenesis. Copies undamaged DNA at stalled replication forks, which arise in vivo from mismatched or misaligned primer ends. These misaligned primers can be extended by PolIV. Exhibits no 3'-5' exonuclease (proofreading) activity. May be involved in translesional synthesis, in conjunction with the beta clamp from PolIII. The chain is DNA polymerase IV from Shigella flexneri.